A 257-amino-acid polypeptide reads, in one-letter code: Zinc transporter ZupT (257 aa).

The next 8 helical transmembrane spans lie at 5–25 (LILTLLAGAATFIGAFLGVLG), 32–52 (VLAFSLGFAAGIMLLISLMEM), 61–81 (GMSPVLGYGMFIIGLLGYFGL), 109–129 (AILLTLGISLHNFPEGIATFV), 137–157 (LGFGIALAVALHNIPEGLAVA), 171–191 (IFWAGISGMAEILGGVLAWLI), 195–215 (LVSPIVMAAIMAAVAGIMVAL), and 236–256 (GVLCGMSIMGLSLVILQTIGI). Residues Asn120 and Glu123 each contribute to the Fe(2+) site. Zn(2+) contacts are provided by Glu123 and His148. The Fe(2+) site is built by Asn149, Glu152, and Glu181. Position 152 (Glu152) interacts with Zn(2+).

This sequence belongs to the ZIP transporter (TC 2.A.5) family. ZupT subfamily.

It is found in the cell inner membrane. It catalyses the reaction Zn(2+)(in) = Zn(2+)(out). Its function is as follows. Mediates zinc uptake. May also transport other divalent cations. In Salmonella agona (strain SL483), this protein is Zinc transporter ZupT.